A 294-amino-acid chain; its full sequence is Mitochondrial substrate carrier family protein ucpB (294 aa).

Over 1-10 the chain is Mitochondrial intermembrane; it reads MTSQESIGIK. 3 Solcar repeats span residues 9-93, 101-187, and 197-288; these read IKFL…IKNY, TNLL…IKHM, and DGLQ…LRKV. A helical transmembrane segment spans residues 11–31; that stretch reads FLFGGLSCMGAAVVSNPVDVL. At 32–67 the chain is on the mitochondrial matrix side; that stretch reads KTRFQIHGEGIDSKSLGLVNGTIKIIKNEGISAMYK. Residues 68–88 form a helical membrane-spanning segment; it reads GLTPSLLREATYSTLRMGGYD. The Mitochondrial intermembrane segment spans residues 89–106; sequence VIKNYFIDSNGKTNLLSK. A helical membrane pass occupies residues 107 to 127; that stretch reads VTSGALSGALGACITSPTDLI. Over 128–161 the chain is Mitochondrial matrix; the sequence is KVRMQASSKGVKYDSISSAFKEIIAKEGIKGLWK. A helical transmembrane segment spans residues 162–182; that stretch reads GVGPTTQRAALLTASQIPSYD. Topologically, residues 183–192 are mitochondrial intermembrane; it reads HIKHMILDHG. The chain crosses the membrane as a helical span at residues 193 to 213; that stretch reads IIQVDGLQVHIVSSIFAGLIA. Topologically, residues 214-267 are mitochondrial matrix; it reads SITTSPVDLVKTRIMNQPFDSNGVGLIYKSSYDCFKKTFQSEGISGLYKGFLPN. A helical transmembrane segment spans residues 268 to 285; sequence WFRIGPHTIVTFILYEYL. At 286-294 the chain is on the mitochondrial intermembrane side; that stretch reads RKVSGIKPI.

The protein belongs to the mitochondrial carrier (TC 2.A.29) family.

It is found in the mitochondrion inner membrane. Its function is as follows. Mitochondrial solute carriers shuttle metabolites, nucleotides, and cofactors through the mitochondrial inner membrane. This chain is Mitochondrial substrate carrier family protein ucpB (ucpB), found in Dictyostelium discoideum (Social amoeba).